Reading from the N-terminus, the 102-residue chain is Large ribosomal subunit protein bL21 (102 aa).

It belongs to the bacterial ribosomal protein bL21 family. Part of the 50S ribosomal subunit. Contacts protein L20.

This protein binds to 23S rRNA in the presence of protein L20. The sequence is that of Large ribosomal subunit protein bL21 from Agathobacter rectalis (strain ATCC 33656 / DSM 3377 / JCM 17463 / KCTC 5835 / VPI 0990) (Eubacterium rectale).